The following is a 346-amino-acid chain: UPF0718 protein YraQ (346 aa).

Helical transmembrane passes span 12 to 32 (PIQWWKPALFFLVVIAGLWYV), 71 to 91 (MIYFLAVWKAAVLGVILGSLI), 113 to 133 (LLGTLFSLPGMMCTCCAAPVA), 146 to 166 (ALAFWMGNPVLNPATLVFMGF), 167 to 187 (VLGWGFAAIRLVAGLVMVLLI), 223 to 243 (ALWTLFWSTIPVYILAVLVLG), 260 to 280 (SLMWVVAMAVAGCLFVIPTAA), 296 to 316 (APALALLMTLPAVSLPSLIML), and 326 to 346 (WLTGAMVAVSGVIVGGLALLF).

Belongs to the UPF0718 family.

The protein localises to the cell membrane. This chain is UPF0718 protein YraQ (yraQ), found in Escherichia coli (strain K12).